Consider the following 456-residue polypeptide: MNVPRETIAAIATAQGRGGVGIVRVSGPLAGRAAEAIIGRTLKPRFAHYGPFVDDAGQVLDEGIALYFPGPNSFTGEDVLELQGHGGPIVLDMLLQRCLQLGSRLARPGEFSERAFLNDKLDLAQAEAIADLIEASSAQAARNALRSLQGAFSRRVDNLTEKLISLRIYVEAAIDFPEEEIDFLADGHVLNMLDDVRAELSTVLREAGQGALLRDGMTVVIAGRPNAGKSSLLNALAGREAAIVTEIAGTTRDVLREHIHIDGMPLHVVDTAGLRDTQDQVEMIGVQRALKAIGEADRILLVVDATAPEAADPFALWPEFLEQRPDPAKVTLIRNKADLSGDPIDLQTSVDGHVTISLSARSGGAGLELLREHLKACMGYEQTSESSFSARRRHLEALRHASDSLEHGRAQLTLAGAGELLAEDLRQAQQALGEITGAFSSDDLLGRIFSSFCIGK.

Residues Arg24, Glu81, and Lys120 each coordinate (6S)-5-formyl-5,6,7,8-tetrahydrofolate. Residues 216 to 379 (GMTVVIAGRP…LREHLKACMG (164 aa)) form the TrmE-type G domain. A K(+)-binding site is contributed by Asn226. GTP-binding positions include 226-231 (NAGKSS), 245-251 (TEIAGTT), 270-273 (DTAG), 335-338 (NKAD), and 359-361 (SAR). Ser230 is a Mg(2+) binding site. K(+) contacts are provided by Thr245, Ile247, and Thr250. Thr251 contacts Mg(2+). Residue Lys456 coordinates (6S)-5-formyl-5,6,7,8-tetrahydrofolate.

The protein belongs to the TRAFAC class TrmE-Era-EngA-EngB-Septin-like GTPase superfamily. TrmE GTPase family. In terms of assembly, homodimer. Heterotetramer of two MnmE and two MnmG subunits. K(+) serves as cofactor.

It localises to the cytoplasm. Functionally, exhibits a very high intrinsic GTPase hydrolysis rate. Involved in the addition of a carboxymethylaminomethyl (cmnm) group at the wobble position (U34) of certain tRNAs, forming tRNA-cmnm(5)s(2)U34. This is tRNA modification GTPase MnmE from Pseudomonas savastanoi pv. phaseolicola (strain 1448A / Race 6) (Pseudomonas syringae pv. phaseolicola (strain 1448A / Race 6)).